The following is a 494-amino-acid chain: Alpha-amylase B (494 aa).

The signal sequence occupies residues 1-18; sequence MFLAKSIVCLALLAVANA. Glutamine 19 bears the Pyrrolidone carboxylic acid mark. A disulfide bond links cysteine 46 and cysteine 102. Ca(2+) is bound by residues asparagine 116, arginine 165, and aspartate 174. Cysteine 153 and cysteine 167 are joined by a disulfide. Position 202 (arginine 202) interacts with chloride. Aspartate 204 acts as the Nucleophile in catalysis. Histidine 208 is a binding site for Ca(2+). Glutamate 241 acts as the Proton donor in catalysis. Residues asparagine 304 and arginine 343 each coordinate chloride. Disulfide bonds link cysteine 376-cysteine 382 and cysteine 448-cysteine 460.

This sequence belongs to the glycosyl hydrolase 13 family. Monomer. The cofactor is Ca(2+). Chloride serves as cofactor.

It catalyses the reaction Endohydrolysis of (1-&gt;4)-alpha-D-glucosidic linkages in polysaccharides containing three or more (1-&gt;4)-alpha-linked D-glucose units.. The chain is Alpha-amylase B (Amy-d) from Drosophila melanogaster (Fruit fly).